The primary structure comprises 109 residues: Large ribosomal subunit protein uL24 (109 aa).

It belongs to the universal ribosomal protein uL24 family. In terms of assembly, part of the 50S ribosomal subunit.

In terms of biological role, one of two assembly initiator proteins, it binds directly to the 5'-end of the 23S rRNA, where it nucleates assembly of the 50S subunit. Its function is as follows. One of the proteins that surrounds the polypeptide exit tunnel on the outside of the subunit. The protein is Large ribosomal subunit protein uL24 of Desulforapulum autotrophicum (strain ATCC 43914 / DSM 3382 / VKM B-1955 / HRM2) (Desulfobacterium autotrophicum).